The following is a 411-amino-acid chain: LL-diaminopimelate aminotransferase (411 aa).

Substrate-binding residues include Tyr15 and Gly42. Pyridoxal 5'-phosphate contacts are provided by residues Tyr72, 108-109, Tyr132, Asn187, Tyr218, and 246-248; these read SK and SFS. 3 residues coordinate substrate: Lys109, Tyr132, and Asn187. Lys249 bears the N6-(pyridoxal phosphate)lysine mark. The pyridoxal 5'-phosphate site is built by Arg257 and Asn292. Substrate-binding residues include Asn292 and Arg388.

Belongs to the class-I pyridoxal-phosphate-dependent aminotransferase family. LL-diaminopimelate aminotransferase subfamily. Homodimer. It depends on pyridoxal 5'-phosphate as a cofactor.

The catalysed reaction is (2S,6S)-2,6-diaminopimelate + 2-oxoglutarate = (S)-2,3,4,5-tetrahydrodipicolinate + L-glutamate + H2O + H(+). It participates in amino-acid biosynthesis; L-lysine biosynthesis via DAP pathway; LL-2,6-diaminopimelate from (S)-tetrahydrodipicolinate (aminotransferase route): step 1/1. Functionally, involved in the synthesis of meso-diaminopimelate (m-DAP or DL-DAP), required for both lysine and peptidoglycan biosynthesis. Catalyzes the direct conversion of tetrahydrodipicolinate to LL-diaminopimelate. This Geobacter sp. (strain M21) protein is LL-diaminopimelate aminotransferase.